A 203-amino-acid polypeptide reads, in one-letter code: MSEILELEAESRTEFGTGAARALRRAGRVPAIIYGAGKTPVSISLEEKEITKYYRKPAFISQLINLTIDKKKYKVLPKAVELHPVTDIVRHVDFVFLEKKTQKMEVPVVYEGKERALGVKRGGYFNIVKRRVTLLCDVNNIPRNITIDVTNMPMATSLKSSKIELPKGCSFVTKKEFVLATIIGRRGAKTEAEGEQQAAEAGK.

Belongs to the bacterial ribosomal protein bL25 family. CTC subfamily. As to quaternary structure, part of the 50S ribosomal subunit; part of the 5S rRNA/L5/L18/L25 subcomplex. Contacts the 5S rRNA. Binds to the 5S rRNA independently of L5 and L18.

In terms of biological role, this is one of the proteins that binds to the 5S RNA in the ribosome where it forms part of the central protuberance. The sequence is that of Large ribosomal subunit protein bL25 from Rickettsia rickettsii (strain Iowa).